The sequence spans 210 residues: Glutathione S-transferase P (210 aa).

Positions 2–81 (PPYTVVYFPV…HLGRTLGLYG (80 aa)) constitute a GST N-terminal domain. A Phosphotyrosine; by EGFR modification is found at Tyr4. Glutathione contacts are provided by residues Tyr8, Arg14, Trp39, Lys45, and 52–53 (QL). A Phosphothreonine modification is found at Thr62. Residue 65–66 (QS) coordinates glutathione. One can recognise a GST C-terminal domain in the interval 83–204 (DQREAALVDM…ASPEHVNLPI (122 aa)). N6-succinyllysine is present on residues Lys103 and Lys116. Lys128 carries the N6-acetyllysine modification.

This sequence belongs to the GST superfamily. Pi family. In terms of assembly, homodimer. Interacts with CDK5.

It localises to the cytoplasm. The protein resides in the mitochondrion. Its subcellular location is the nucleus. The enzyme catalyses RX + glutathione = an S-substituted glutathione + a halide anion + H(+). The catalysed reaction is prostaglandin J2 + glutathione = prostaglandin J2-S-(R)-glutathione. It catalyses the reaction prostaglandin J2 + glutathione = prostaglandin J2-S-(S)-glutathione. It carries out the reaction prostaglandin A2 + glutathione = prostaglandin A2-S-(S)-glutathione. The enzyme catalyses 11(S)-hydroxy-14(S),15(S)-epoxy-(5Z,8Z,12E)-eicosatrienoate + glutathione = (11S,15S)-dihydroxy-14(R)-S-glutathionyl-(5Z,8Z,12E)-eicosatrienoate. In terms of biological role, conjugation of reduced glutathione to a wide number of exogenous and endogenous hydrophobic electrophiles. Involved in the formation of glutathione conjugates of both prostaglandin A2 (PGA2) and prostaglandin J2 (PGJ2). Participates in the formation of novel hepoxilin regioisomers. Negatively regulates CDK5 activity via p25/p35 translocation to prevent neurodegeneration. This is Glutathione S-transferase P (GSTP1) from Macaca mulatta (Rhesus macaque).